The primary structure comprises 212 residues: Methylthioribulose-1-phosphate dehydratase (212 aa).

His97 and His99 together coordinate Zn(2+).

Belongs to the aldolase class II family. MtnB subfamily. As to quaternary structure, homotetramer. Zn(2+) serves as cofactor.

It carries out the reaction 5-(methylsulfanyl)-D-ribulose 1-phosphate = 5-methylsulfanyl-2,3-dioxopentyl phosphate + H2O. It functions in the pathway amino-acid biosynthesis; L-methionine biosynthesis via salvage pathway; L-methionine from S-methyl-5-thio-alpha-D-ribose 1-phosphate: step 2/6. Its function is as follows. Catalyzes the dehydration of methylthioribulose-1-phosphate (MTRu-1-P) into 2,3-diketo-5-methylthiopentyl-1-phosphate (DK-MTP-1-P). The chain is Methylthioribulose-1-phosphate dehydratase from Bacillus cytotoxicus (strain DSM 22905 / CIP 110041 / 391-98 / NVH 391-98).